A 196-amino-acid polypeptide reads, in one-letter code: Alpha-crystallin A chain (196 aa).

M1 carries the N-acetylmethionine modification. Residues 1 to 63 are required for complex formation with BFSP1 and BFSP2; that stretch reads MDVTIQHPWF…RTVLDSCISE (63 aa). The residue at position 6 (Q6) is a Deamidated glutamine; partial. Phosphoserine is present on S45. Q50 is modified (deamidated glutamine; partial). The region spanning 76 to 185 is the sHSP domain; that stretch reads HAGNPENNPI…GHSERAIPVS (110 aa). 2 positions are modified to N6-acetyllysine: K93 and K122. Residue H123 coordinates Zn(2+). A Deamidated asparagine; partial modification is found at N124. Positions 125 and 130 each coordinate Zn(2+). Residue S145 is modified to Phosphoserine. Q170 is modified (deamidated glutamine; partial). A disordered region spans residues 170 to 196; sequence QSGLDAGHSERAIPVSQEEKPSSAPLF. Over residues 176-190 the composition is skewed to basic and acidic residues; sequence GHSERAIPVSQEEKP. H177 lines the Zn(2+) pocket. S185 carries an O-linked (GlcNAc) serine glycan.

It belongs to the small heat shock protein (HSP20) family. In terms of assembly, heteromer composed of three CRYAA and one CRYAB subunits. Inter-subunit bridging via zinc ions enhances stability, which is crucial as there is no protein turn over in the lens. Can also form homodimers and homotetramers (dimers of dimers) which serve as the building blocks of homooligomers. Within homooligomers, the zinc-binding motif is created from residues of 3 different molecules. His-123 and Glu-125 from one molecule are ligands of the zinc ion, and His-130 and His-177 residues from additional molecules complete the site with tetrahedral coordination geometry. Part of a complex required for lens intermediate filament formation composed of BFSP1, BFSP2 and CRYAA. In terms of processing, acetylation at Lys-93 may increase chaperone activity. Undergoes age-dependent proteolytical cleavage at the C-terminus.

It is found in the cytoplasm. The protein resides in the nucleus. Contributes to the transparency and refractive index of the lens. Acts as a chaperone, preventing aggregation of various proteins under a wide range of stress conditions. Required for the correct formation of lens intermediate filaments as part of a complex composed of BFSP1, BFSP2 and CRYAA. The protein is Alpha-crystallin A chain (CRYAA) of Spalax ehrenbergi (Middle East blind mole rat).